The following is a 129-amino-acid chain: Ribosome-binding factor A (129 aa).

The protein belongs to the RbfA family. As to quaternary structure, monomer. Binds 30S ribosomal subunits, but not 50S ribosomal subunits or 70S ribosomes.

Its subcellular location is the cytoplasm. One of several proteins that assist in the late maturation steps of the functional core of the 30S ribosomal subunit. Associates with free 30S ribosomal subunits (but not with 30S subunits that are part of 70S ribosomes or polysomes). Required for efficient processing of 16S rRNA. May interact with the 5'-terminal helix region of 16S rRNA. This chain is Ribosome-binding factor A, found in Actinobacillus succinogenes (strain ATCC 55618 / DSM 22257 / CCUG 43843 / 130Z).